We begin with the raw amino-acid sequence, 1118 residues long: Carbamoyl phosphate synthase arginine-specific large chain (1118 aa).

The tract at residues 23 to 420 (QLVEGVNSVL…AFQKALRQVD (398 aa)) is carboxyphosphate synthetic domain. ATP is bound by residues Arg150, Arg190, Gly196, Gly197, Lys227, Leu229, Glu234, Gly260, Val261, His262, Gln303, and Glu317. The 193-residue stretch at 154 to 346 (ASALKDINIP…LAYTAAKIGL (193 aa)) folds into the ATP-grasp 1 domain. 3 residues coordinate Mg(2+): Gln303, Glu317, and Asn319. Mn(2+) is bound by residues Gln303, Glu317, and Asn319. The interval 421–573 (PSLLGFQGST…YTTYNATKND (153 aa)) is oligomerization domain. Positions 574 to 958 (VEFNENGMLV…SYWTAIQSTM (385 aa)) are carbamoyl phosphate synthetic domain. The ATP-grasp 2 domain maps to 698-890 (SSILDSIDVD…FIEIAVKAFL (193 aa)). Residues Arg734, Lys773, Ile775, Glu780, Gly805, Val806, His807, Ser808, Gln848, and Glu861 each contribute to the ATP site. Gln848, Glu861, and Asn863 together coordinate Mg(2+). Mn(2+) is bound by residues Gln848, Glu861, and Asn863. An allosteric domain region spans residues 959–1102 (NFHVPLPPSG…KILESHDVIV (144 aa)). The MGS-like domain occupies 960-1118 (FHVPLPPSGI…WDEFIGFKAY (159 aa)).

Belongs to the CarB family. Heterodimer composed of 2 chains; the small (or glutamine) chain promotes the hydrolysis of glutamine to ammonia, which is used by the large (or ammonia) chain to synthesize carbamoyl phosphate. It depends on Mg(2+) as a cofactor. The cofactor is Mn(2+).

Its subcellular location is the cytoplasm. The enzyme catalyses hydrogencarbonate + L-glutamine + 2 ATP + H2O = carbamoyl phosphate + L-glutamate + 2 ADP + phosphate + 2 H(+). It carries out the reaction hydrogencarbonate + NH4(+) + 2 ATP = carbamoyl phosphate + 2 ADP + phosphate + 2 H(+). The protein operates within amino-acid biosynthesis; L-arginine biosynthesis; carbamoyl phosphate from bicarbonate: step 1/1. Large subunit of the arginine-specific carbamoyl phosphate synthase (CPSase). CPSase catalyzes the formation of carbamoyl phosphate from the ammonia moiety of glutamine, hydrogencarbonate, and phosphate donated by ATP, constituting the first step of 2 biosynthetic pathways, one leading to arginine and/or urea and the other to pyrimidine nucleotides. The large subunit (synthetase) binds the substrates ammonia (free or transferred from glutamine from the small subunit), hydrogencarbonate and ATP and carries out an ATP-coupled ligase reaction, activating hydrogencarbonate by forming carboxy phosphate which reacts with ammonia to form carbamoyl phosphate. The chain is Carbamoyl phosphate synthase arginine-specific large chain (CPA2) from Saccharomyces cerevisiae (strain ATCC 204508 / S288c) (Baker's yeast).